The sequence spans 184 residues: Tumor necrosis factor alpha-induced protein 8-like protein 2 (184 aa).

Ser3 carries the phosphoserine modification.

The protein belongs to the TNFAIP8 family. TNFAIP8L2 subfamily. In terms of assembly, may interact with CASP8; however, such result is unclear since could not reproduce the interaction with CASP8. Interacts with RAC1. Phosphorylated by TAK1/MAP3K7; this phosphorylation triggers association with BTRC and subsequent ubiquitination and degradation. In terms of processing, ubiquitinated in a BTRC-depdent manner; leading to degradation mediated through the proteasome pathway.

The protein resides in the cytoplasm. The protein localises to the nucleus. It is found in the lysosome. Its function is as follows. Acts as a negative regulator of innate and adaptive immunity by maintaining immune homeostasis. Plays a regulatory role in the Toll-like signaling pathway by determining the strength of LPS-induced signaling and gene expression. Inhibits TCR-mediated T-cell activation and negatively regulate T-cell function to prevent hyperresponsiveness. Also inhibits autolysosome formation via negatively modulating MTOR activation by interacting with RAC1 and promoting the disassociation of the RAC1-MTOR complex. Plays an essential role in NK-cell biology by acting as a checkpoint and displaying an expression pattern correlating with NK-cell maturation process and by negatively regulating NK-cell maturation and antitumor immunity. Mechanistically, suppresses IL-15-triggered mTOR activity in NK-cells. This is Tumor necrosis factor alpha-induced protein 8-like protein 2 (Tnfaip8l2) from Rattus norvegicus (Rat).